The chain runs to 221 residues: Glutathione S-transferase 1 (221 aa).

Positions 7–88 (QKMQLYSFSL…YLEEKFPENP (82 aa)) constitute a GST N-terminal domain. Residues 17–22 (SSCAWR), Val-60, 72–73 (DS), Gln-112, and 116–118 (NLA) each bind glutathione. The region spanning 93–221 (DLQKRALNYQ…ISPMLDEAKS (129 aa)) is the GST C-terminal domain.

This sequence belongs to the GST superfamily. Zeta family.

It carries out the reaction RX + glutathione = an S-substituted glutathione + a halide anion + H(+). Conjugation of reduced glutathione to a wide number of exogenous and endogenous hydrophobic electrophiles. This is Glutathione S-transferase 1 (GST1) from Dianthus caryophyllus (Carnation).